A 123-amino-acid polypeptide reads, in one-letter code: Large ribosomal subunit protein bL12 (123 aa).

It belongs to the bacterial ribosomal protein bL12 family. Homodimer. Part of the ribosomal stalk of the 50S ribosomal subunit. Forms a multimeric L10(L12)X complex, where L10 forms an elongated spine to which 2 to 4 L12 dimers bind in a sequential fashion. Binds GTP-bound translation factors.

Functionally, forms part of the ribosomal stalk which helps the ribosome interact with GTP-bound translation factors. Is thus essential for accurate translation. The protein is Large ribosomal subunit protein bL12 of Dehalococcoides mccartyi (strain ATCC BAA-2100 / JCM 16839 / KCTC 5957 / BAV1).